Here is a 233-residue protein sequence, read N- to C-terminus: MKVGIIGAMEEEVTLLRDRIENRQTLARAGCEIYTGQLNGIDVALLKSGIGKVAAAMGTTLLLEHCQPDLVINTGSAGGLASSLKVGDIVVSNEVRYHDADVTAFGYEPGQMAGCPAAFVADEDLIALAENCIQQLKLNAVRGLICSGDAFINGAEPLARIRAAFPTVAAVEMEAAAIGHVCYLFNTPFVVVRAISDVADQASHLSFEEFLVVAAKQSTLMIEAMLTTLAQRG.

The active-site Proton acceptor is the glutamate 12. Substrate contacts are provided by residues glycine 78, isoleucine 152, and 173-174 (ME). The active-site Proton donor is the aspartate 197.

It belongs to the PNP/UDP phosphorylase family. MtnN subfamily. Homodimer.

It carries out the reaction S-adenosyl-L-homocysteine + H2O = S-(5-deoxy-D-ribos-5-yl)-L-homocysteine + adenine. The catalysed reaction is S-methyl-5'-thioadenosine + H2O = 5-(methylsulfanyl)-D-ribose + adenine. The enzyme catalyses 5'-deoxyadenosine + H2O = 5-deoxy-D-ribose + adenine. It functions in the pathway amino-acid biosynthesis; L-methionine biosynthesis via salvage pathway; S-methyl-5-thio-alpha-D-ribose 1-phosphate from S-methyl-5'-thioadenosine (hydrolase route): step 1/2. Catalyzes the irreversible cleavage of the glycosidic bond in both 5'-methylthioadenosine (MTA) and S-adenosylhomocysteine (SAH/AdoHcy) to adenine and the corresponding thioribose, 5'-methylthioribose and S-ribosylhomocysteine, respectively. Also cleaves 5'-deoxyadenosine, a toxic by-product of radical S-adenosylmethionine (SAM) enzymes, into 5-deoxyribose and adenine. Thus, is required for in vivo function of the radical SAM enzymes biotin synthase and lipoic acid synthase, that are inhibited by 5'-deoxyadenosine accumulation. The chain is 5'-methylthioadenosine/S-adenosylhomocysteine nucleosidase from Yersinia pseudotuberculosis serotype O:1b (strain IP 31758).